The sequence spans 306 residues: Ribonuclease H2 subunit B (306 aa).

The segment at 232-285 is disordered; it reads LPDLSSPTPEPPVKKRRVSDAPVEADEDYTKYNSDNKSRKSNSKMTAAQKSLAK. A compositionally biased stretch (basic and acidic residues) spans 259–269; it reads DYTKYNSDNKS.

Belongs to the RNase H2 subunit B family. The RNase H2 complex is a heterotrimer composed of the catalytic subunit RNASEH2A and the non-catalytic subunits RNASEH2B and RNASEH2C.

Its subcellular location is the nucleus. In terms of biological role, non catalytic subunit of RNase H2, an endonuclease that specifically degrades the RNA of RNA:DNA hybrids. Participates in DNA replication, possibly by mediating the removal of lagging-strand Okazaki fragment RNA primers during DNA replication. Mediates the excision of single ribonucleotides from DNA:RNA duplexes. In Xenopus laevis (African clawed frog), this protein is Ribonuclease H2 subunit B (rnaseh2b).